A 237-amino-acid polypeptide reads, in one-letter code: Glutathione S-transferase L1 (237 aa).

The region spanning Gly29 to Ser110 is the GST N-terminal domain. Residues Cys39–Pro40, Asn67–Arg68, Lys81–Val82, and Glu94–Ser95 each bind glutathione. The GST C-terminal domain maps to Tyr112–Tyr232.

The protein belongs to the GST superfamily. Lambda family.

The protein localises to the cytoplasm. Its subcellular location is the cytosol. It catalyses the reaction RX + glutathione = an S-substituted glutathione + a halide anion + H(+). Functionally, catalyzes the glutathione-dependent reduction of S-glutathionylquercetin to quercetin. In vitro, possesses glutathione-dependent thiol transferase activity toward 2-hydroxyethyl disulfide (HED). This Arabidopsis thaliana (Mouse-ear cress) protein is Glutathione S-transferase L1 (GSTL1).